The primary structure comprises 494 residues: Bifunctional protein HldE (494 aa).

A ribokinase region spans residues 1 to 334 (MPTPILDFDA…RKILPHAYLA (334 aa)). 209–212 (NRKE) lines the ATP pocket. The active site involves D279. The cytidylyltransferase stretch occupies residues 362-494 (FTNGCFDILH…LVHRARGGAK (133 aa)).

This sequence in the N-terminal section; belongs to the carbohydrate kinase PfkB family. The protein in the C-terminal section; belongs to the cytidylyltransferase family. Homodimer.

The enzyme catalyses D-glycero-beta-D-manno-heptose 7-phosphate + ATP = D-glycero-beta-D-manno-heptose 1,7-bisphosphate + ADP + H(+). It catalyses the reaction D-glycero-beta-D-manno-heptose 1-phosphate + ATP + H(+) = ADP-D-glycero-beta-D-manno-heptose + diphosphate. The protein operates within nucleotide-sugar biosynthesis; ADP-L-glycero-beta-D-manno-heptose biosynthesis; ADP-L-glycero-beta-D-manno-heptose from D-glycero-beta-D-manno-heptose 7-phosphate: step 1/4. It participates in nucleotide-sugar biosynthesis; ADP-L-glycero-beta-D-manno-heptose biosynthesis; ADP-L-glycero-beta-D-manno-heptose from D-glycero-beta-D-manno-heptose 7-phosphate: step 3/4. Functionally, catalyzes the phosphorylation of D-glycero-D-manno-heptose 7-phosphate at the C-1 position to selectively form D-glycero-beta-D-manno-heptose-1,7-bisphosphate. Its function is as follows. Catalyzes the ADP transfer from ATP to D-glycero-beta-D-manno-heptose 1-phosphate, yielding ADP-D-glycero-beta-D-manno-heptose. The protein is Bifunctional protein HldE of Bradyrhizobium diazoefficiens (strain JCM 10833 / BCRC 13528 / IAM 13628 / NBRC 14792 / USDA 110).